Here is a 505-residue protein sequence, read N- to C-terminus: Kelch-like protein 42 (505 aa).

A BTB domain is found at 5-78; the sequence is EMVQIRLEDR…INAGGAREGW (74 aa). At S43 the chain carries Phosphoserine. Kelch repeat units follow at residues 176–234, 235–282, 284–325, 327–372, 374–429, and 431–480; these read PGDV…PLAN, NLPP…NEWL, VASM…DAWN, VAPL…DMWT, FETC…RQWL, and LKEN…DSWE.

In terms of assembly, component of the BCR(KLHL42) E3 ubiquitin ligase complex, at least composed of CUL3 and KLHL42. Interacts (via the BTB domain) with CUL3. Interacts (via the kelch domains) with KATNA1.

Its subcellular location is the cytoplasm. The protein localises to the cytoskeleton. It localises to the spindle. It participates in protein modification; protein ubiquitination. In terms of biological role, substrate-specific adapter of a BCR (BTB-CUL3-RBX1) E3 ubiquitin-protein ligase complex required for mitotic progression and cytokinesis. The BCR(KLHL42) E3 ubiquitin ligase complex mediates the ubiquitination and subsequent degradation of KATNA1. Involved in microtubule dynamics throughout mitosis. This is Kelch-like protein 42 (KLHL42) from Homo sapiens (Human).